The primary structure comprises 611 residues: DNA mismatch repair protein MutL (611 aa).

Residues 364–384 (NVNSKPSKYRPATSPTVPKYT) are disordered.

It belongs to the DNA mismatch repair MutL/HexB family.

This protein is involved in the repair of mismatches in DNA. It is required for dam-dependent methyl-directed DNA mismatch repair. May act as a 'molecular matchmaker', a protein that promotes the formation of a stable complex between two or more DNA-binding proteins in an ATP-dependent manner without itself being part of a final effector complex. The sequence is that of DNA mismatch repair protein MutL from Rickettsia bellii (strain OSU 85-389).